The primary structure comprises 872 residues: Alanine--tRNA ligase (872 aa).

Zn(2+) is bound by residues H567, H571, C669, and H673.

The protein belongs to the class-II aminoacyl-tRNA synthetase family. The cofactor is Zn(2+).

It localises to the cytoplasm. The catalysed reaction is tRNA(Ala) + L-alanine + ATP = L-alanyl-tRNA(Ala) + AMP + diphosphate. In terms of biological role, catalyzes the attachment of alanine to tRNA(Ala) in a two-step reaction: alanine is first activated by ATP to form Ala-AMP and then transferred to the acceptor end of tRNA(Ala). Also edits incorrectly charged Ser-tRNA(Ala) and Gly-tRNA(Ala) via its editing domain. The chain is Alanine--tRNA ligase from Streptococcus pneumoniae (strain Hungary19A-6).